A 492-amino-acid chain; its full sequence is Serine incorporator 4 (492 aa).

The next 10 helical transmembrane spans lie at 58–78 (FYIL…SKTV), 113–133 (AVYR…VLLV), 148–168 (SFWS…FCIP), 179–199 (IGIC…TAFA), 217–237 (FLGV…GAVL), 254–274 (LLSL…APCI), 281–301 (SGLL…FSAL), 330–350 (IPDA…VLFA), 421–441 (GFHF…TNWF), and 464–484 (VASC…PLLA).

Belongs to the TDE1 family.

Its subcellular location is the membrane. Its function is as follows. Incorporates a polar amino acid serine into membranes and facilitates the synthesis of two serine-derived lipids, phosphatidylserine and sphingolipids. The sequence is that of Serine incorporator 4 (Serinc4) from Rattus norvegicus (Rat).